We begin with the raw amino-acid sequence, 315 residues long: Transcriptional regulator protein Pur-beta (315 aa).

A disordered region spans residues 1-39 (MADGDSGSERGGGGPGSFQPAPRGGGGPGGEQETQELAS). Ala2 carries the N-acetylalanine modification. Residues Ser6 and Ser8 each carry the phosphoserine modification. Arg23 carries the omega-N-methylarginine modification. The segment at 28–254 (PGGEQETQEL…GVFLRVSEVK (227 aa)) is DNA-binding. Phosphothreonine is present on Thr34. Ser104 is modified (phosphoserine). Arg155 is modified (omega-N-methylarginine). The segment at 200-220 (DDELAGGPGGGAGGPGGGLYG) is disordered. A compositionally biased stretch (gly residues) spans 205-219 (GGPGGGAGGPGGGLY). Lys270 bears the N6-acetyllysine mark. The span at 288–298 (RQRDKLYERRG) shows a compositional bias: basic and acidic residues. Residues 288–315 (RQRDKLYERRGGGSGGGDESEGEEVDED) are disordered. Arg297 carries the omega-N-methylarginine modification. Ser301 and Ser307 each carry phosphoserine. The segment covering 305–315 (DESEGEEVDED) has biased composition (acidic residues).

This sequence belongs to the PUR DNA-binding protein family. In terms of assembly, homodimer, heterodimer with PURA and heterotrimer with PURA and YBX1/Y-box protein 1. Interacts with MYOCD and SRF. Expressed in muscle cells and in the liver.

The protein localises to the nucleus. Its function is as follows. Transcriptional regulator which can act as an activator or a repressor. Represses the transcription of ACTA2 in fibroblasts and smooth muscle cells via its ability to interact with the purine-rich strand of a MCAT- containing element in the 5' flanking region of the gene. Represses the transcription of MYOCD, capable of repressing all isoforms of MYOCD but the magnitude of the repressive effects is most notable for the SMC- specific isoforms. Promotes hepatic glucose production by activating the transcription of ADCY6, leading to cAMP accumulation, increased PKA activity, CREB activation, and increased transcription of PCK1 and G6PC genes. Has capacity to bind repeated elements in single-stranded DNA such as the purine-rich single strand of the PUR element located upstream of the MYC gene. Participates in transcriptional and translational regulation of alpha-MHC expression in cardiac myocytes by binding to the purine-rich negative regulatory (PNR) element. Modulates constitutive liver galectin-3 gene transcription by binding to its promoter. May play a role in the dendritic transport of a subset of mRNAs. The chain is Transcriptional regulator protein Pur-beta (Purb) from Rattus norvegicus (Rat).